Reading from the N-terminus, the 217-residue chain is Serine acetyltransferase (217 aa).

Belongs to the transferase hexapeptide repeat family.

The protein localises to the cytoplasm. The catalysed reaction is L-serine + acetyl-CoA = O-acetyl-L-serine + CoA. It participates in amino-acid biosynthesis; L-cysteine biosynthesis; L-cysteine from L-serine: step 1/2. With respect to regulation, inhibited by cysteine. In terms of biological role, catalyzes the acetylation of serine by acetyl-CoA to produce O-acetylserine (OAS). This Bacillus pumilus (strain SAFR-032) protein is Serine acetyltransferase.